Reading from the N-terminus, the 241-residue chain is Eukaryotic translation initiation factor 3 subunit J (241 aa).

A disordered region spans residues 1 to 97; that stretch reads MEEDWEQLSE…EEEDMTPEQK (97 aa). Residues 28-45 are compositionally biased toward acidic residues; sequence GEDEEEEVKDSWEDEDEL. Positions 31–119 form a coiled coil; that stretch reads EEEEVKDSWE…ESDLKNALDT (89 aa). 2 stretches are compositionally biased toward basic and acidic residues: residues 46 to 58 and 69 to 87; these read EEKK…ETPK and IADK…RLEK.

This sequence belongs to the eIF-3 subunit J family. Component of the eukaryotic translation initiation factor 3 (eIF-3) complex.

The protein resides in the cytoplasm. Component of the eukaryotic translation initiation factor 3 (eIF-3) complex, which is involved in protein synthesis of a specialized repertoire of mRNAs and, together with other initiation factors, stimulates binding of mRNA and methionyl-tRNAi to the 40S ribosome. The eIF-3 complex specifically targets and initiates translation of a subset of mRNAs involved in cell proliferation. This chain is Eukaryotic translation initiation factor 3 subunit J, found in Aedes aegypti (Yellowfever mosquito).